The sequence spans 211 residues: Allatostatins MIP (211 aa).

A signal peptide spans 1 to 24 (MAHTKTRRTYGFLMVLLILGSACG). The propeptide occupies 25-63 (NLVASGSAGSPPSNEPGGGGLSEQVVLDQLSESDLYGNN). Trp74 carries the post-translational modification Tryptophan amide. Positions 78-148 (SSSGDVSDPD…DDLAGEPDVE (71 aa)) are excised as a propeptide. The span at 115-135 (ASGQSAQQQQQQPLQQQSQSG) shows a compositional bias: low complexity. Residues 115–142 (ASGQSAQQQQQQPLQQQSQSGEDFDDLA) are disordered. Tryptophan amide is present on residues Trp159, Trp175, Trp189, and Trp202. A disordered region spans residues 168–190 (WNKFRGAWGKREPTWNNLKGMWG). The propeptide occupies 206 to 211 (SQLPSN).

As to expression, in larvae, strongly expressed in the midgut region before and in between the copper cells, and in a group of cells in the posterior part of the larval midgut. Expressed in the neurons of many areas including the subesophageal ganglion/tritocerebrum (SOG), olfactory glomeruli, lateral ventral protocerebrum, mushroom body, the optic lobe medulla and in the antennal lobes.

The protein resides in the secreted. Ligand for the sex peptide receptor (SPR). Stabilizes sleep and maintains sleep homeostasis to inhibit the activity of wake-promoting circuits, such as those that involve the pigment dispersing factor (pdf) neurons. Regulated by the circadian clock network and pathways associated with a sleep homeostat. May also have a regulatory role in gut motility. This is Allatostatins MIP (Mip) from Drosophila melanogaster (Fruit fly).